Reading from the N-terminus, the 249-residue chain is 2,3-bisphosphoglycerate-dependent phosphoglycerate mutase (249 aa).

Substrate is bound by residues 9–16 (RHGQSQWN), 22–23 (TG), Arg-61, 88–91 (ERHY), Lys-99, 115–116 (RR), and 184–185 (GN). His-10 acts as the Tele-phosphohistidine intermediate in catalysis. The active-site Proton donor/acceptor is the Glu-88.

Belongs to the phosphoglycerate mutase family. BPG-dependent PGAM subfamily. As to quaternary structure, homodimer.

The enzyme catalyses (2R)-2-phosphoglycerate = (2R)-3-phosphoglycerate. The protein operates within carbohydrate degradation; glycolysis; pyruvate from D-glyceraldehyde 3-phosphate: step 3/5. Functionally, catalyzes the interconversion of 2-phosphoglycerate and 3-phosphoglycerate. The polypeptide is 2,3-bisphosphoglycerate-dependent phosphoglycerate mutase (Xanthomonas oryzae pv. oryzae (strain PXO99A)).